The primary structure comprises 371 residues: Anhydro-N-acetylmuramic acid kinase (371 aa).

10–17 contacts ATP; it reads GTSLDGID.

Belongs to the anhydro-N-acetylmuramic acid kinase family.

The catalysed reaction is 1,6-anhydro-N-acetyl-beta-muramate + ATP + H2O = N-acetyl-D-muramate 6-phosphate + ADP + H(+). It functions in the pathway amino-sugar metabolism; 1,6-anhydro-N-acetylmuramate degradation. Its pathway is cell wall biogenesis; peptidoglycan recycling. Its function is as follows. Catalyzes the specific phosphorylation of 1,6-anhydro-N-acetylmuramic acid (anhMurNAc) with the simultaneous cleavage of the 1,6-anhydro ring, generating MurNAc-6-P. Is required for the utilization of anhMurNAc either imported from the medium or derived from its own cell wall murein, and thus plays a role in cell wall recycling. This is Anhydro-N-acetylmuramic acid kinase from Chromohalobacter salexigens (strain ATCC BAA-138 / DSM 3043 / CIP 106854 / NCIMB 13768 / 1H11).